A 419-amino-acid chain; its full sequence is L-rhamnose isomerase (419 aa).

Positions 262, 294, and 296 each coordinate Mn(2+).

The protein belongs to the rhamnose isomerase family. As to quaternary structure, homotetramer. It depends on Mn(2+) as a cofactor.

The protein resides in the cytoplasm. It carries out the reaction L-rhamnopyranose = L-rhamnulose. The protein operates within carbohydrate degradation; L-rhamnose degradation; glycerone phosphate from L-rhamnose: step 1/3. Its function is as follows. Catalyzes the interconversion of L-rhamnose and L-rhamnulose. The sequence is that of L-rhamnose isomerase from Escherichia coli (strain 55989 / EAEC).